Here is a 358-residue protein sequence, read N- to C-terminus: Dynein axonemal assembly factor 10 (358 aa).

WD repeat units lie at residues 64–106 (EKPK…TPVY), 116–155 (NCID…TPVA), 163–206 (ETKR…VRWE), 208–250 (NIKN…PSKG), 258–298 (AHKS…QRSR), and 320–358 (LSTQ…LNKL).

Interacts with PIH1D1; the interaction associates DNAAF10 with the R2TP complex. Interacts with several dynein axonemal assembly factors.

The protein localises to the dynein axonemal particle. In terms of biological role, key assembly factor specifically required for the stability of axonemal dynein heavy chains in cytoplasm. This Xenopus tropicalis (Western clawed frog) protein is Dynein axonemal assembly factor 10 (dnaaf10).